The sequence spans 202 residues: Dephospho-CoA kinase (202 aa).

Residues 4–200 (VVGVTGGIGS…QRYLAATVAQ (197 aa)) enclose the DPCK domain. ATP is bound at residue 12–17 (GSGKSA).

It belongs to the CoaE family.

The protein resides in the cytoplasm. The catalysed reaction is 3'-dephospho-CoA + ATP = ADP + CoA + H(+). It functions in the pathway cofactor biosynthesis; coenzyme A biosynthesis; CoA from (R)-pantothenate: step 5/5. Functionally, catalyzes the phosphorylation of the 3'-hydroxyl group of dephosphocoenzyme A to form coenzyme A. In Idiomarina loihiensis (strain ATCC BAA-735 / DSM 15497 / L2-TR), this protein is Dephospho-CoA kinase.